The following is a 129-amino-acid chain: UPF0325 protein PC1_0937 (129 aa).

The protein belongs to the UPF0325 family.

The chain is UPF0325 protein PC1_0937 from Pectobacterium carotovorum subsp. carotovorum (strain PC1).